We begin with the raw amino-acid sequence, 236 residues long: Glucosamine-6-phosphate deaminase (236 aa).

Asp-67 (proton acceptor; for enolization step) is an active-site residue. Asn-136 acts as the For ring-opening step in catalysis. Residue His-138 is the Proton acceptor; for ring-opening step of the active site. Glu-143 functions as the For ring-opening step in the catalytic mechanism.

Belongs to the glucosamine/galactosamine-6-phosphate isomerase family. NagB subfamily.

The catalysed reaction is alpha-D-glucosamine 6-phosphate + H2O = beta-D-fructose 6-phosphate + NH4(+). Its pathway is amino-sugar metabolism; N-acetylneuraminate degradation; D-fructose 6-phosphate from N-acetylneuraminate: step 5/5. Its function is as follows. Catalyzes the reversible isomerization-deamination of glucosamine 6-phosphate (GlcN6P) to form fructose 6-phosphate (Fru6P) and ammonium ion. This Lachnoclostridium phytofermentans (strain ATCC 700394 / DSM 18823 / ISDg) (Clostridium phytofermentans) protein is Glucosamine-6-phosphate deaminase.